We begin with the raw amino-acid sequence, 688 residues long: GTPase IMAP family member 8 (688 aa).

Over residues 1-14 the composition is skewed to low complexity; that stretch reads MATSSHQGAAAGSQ. The disordered stretch occupies residues 1–42; that stretch reads MATSSHQGAAAGSQAEHRSCEASVGQGERPSASQGQEGNFKQ. Positions 31–42 are enriched in polar residues; the sequence is SASQGQEGNFKQ. AIG1-type G domains lie at 46–247, 282–472, and 473–677; these read TSTL…MESS, MPEL…VIRE, and KELL…GQLK. The segment at 55–62 is G1; sequence GKQGAGKS. Residues 55-63 and Ser76 contribute to the GTP site; that span reads GKQGAGKSA. The interval 82 to 86 is G2; it reads MVTDR. A G3 region spans residues 103–106; it reads DTPD. The G4 stretch occupies residues 172–175; that stretch reads TRED. Residues 173–175 and Asn209 each bind GTP; that span reads RED. Positions 208–210 are G5; that stretch reads NNK.

It belongs to the TRAFAC class TrmE-Era-EngA-EngB-Septin-like GTPase superfamily. AIG1/Toc34/Toc159-like paraseptin GTPase family. IAN subfamily. Abundantly expressed in the thymus (in thymocytes), spleen (in splenocytes), lymph node, followed by bone marrow and lung.

Its subcellular location is the endoplasmic reticulum. The protein localises to the golgi apparatus. It localises to the mitochondrion. The protein resides in the cytoplasm. It is found in the cytosol. Functionally, exerts an anti-apoptotic effect in the immune system and is involved in responses to infections. The polypeptide is GTPase IMAP family member 8 (Gimap8) (Mus musculus (Mouse)).